The chain runs to 92 residues: Small ribosomal subunit protein uS19 (92 aa).

It belongs to the universal ribosomal protein uS19 family.

In terms of biological role, protein S19 forms a complex with S13 that binds strongly to the 16S ribosomal RNA. This chain is Small ribosomal subunit protein uS19, found in Thermosynechococcus vestitus (strain NIES-2133 / IAM M-273 / BP-1).